Consider the following 284-residue polypeptide: 2-dehydro-3-deoxyphosphooctonate aldolase (284 aa).

The protein belongs to the KdsA family.

It is found in the cytoplasm. The enzyme catalyses D-arabinose 5-phosphate + phosphoenolpyruvate + H2O = 3-deoxy-alpha-D-manno-2-octulosonate-8-phosphate + phosphate. It participates in carbohydrate biosynthesis; 3-deoxy-D-manno-octulosonate biosynthesis; 3-deoxy-D-manno-octulosonate from D-ribulose 5-phosphate: step 2/3. It functions in the pathway bacterial outer membrane biogenesis; lipopolysaccharide biosynthesis. This is 2-dehydro-3-deoxyphosphooctonate aldolase from Methylobacterium radiotolerans (strain ATCC 27329 / DSM 1819 / JCM 2831 / NBRC 15690 / NCIMB 10815 / 0-1).